The primary structure comprises 335 residues: Acetyl-coenzyme A carboxylase carboxyl transferase subunit alpha (335 aa).

The 261-residue stretch at 48–308 (TLEKKVDALR…KGMLIEELKA (261 aa)) folds into the CoA carboxyltransferase C-terminal domain.

The protein belongs to the AccA family. Acetyl-CoA carboxylase is a heterohexamer composed of biotin carboxyl carrier protein (AccB), biotin carboxylase (AccC) and two subunits each of ACCase subunit alpha (AccA) and ACCase subunit beta (AccD).

The protein resides in the cytoplasm. The catalysed reaction is N(6)-carboxybiotinyl-L-lysyl-[protein] + acetyl-CoA = N(6)-biotinyl-L-lysyl-[protein] + malonyl-CoA. Its pathway is lipid metabolism; malonyl-CoA biosynthesis; malonyl-CoA from acetyl-CoA: step 1/1. Its function is as follows. Component of the acetyl coenzyme A carboxylase (ACC) complex. First, biotin carboxylase catalyzes the carboxylation of biotin on its carrier protein (BCCP) and then the CO(2) group is transferred by the carboxyltransferase to acetyl-CoA to form malonyl-CoA. This is Acetyl-coenzyme A carboxylase carboxyl transferase subunit alpha from Chlorobium luteolum (strain DSM 273 / BCRC 81028 / 2530) (Pelodictyon luteolum).